The chain runs to 120 residues: NAD(P)H-quinone oxidoreductase subunit 3, chloroplastic (120 aa).

3 helical membrane-spanning segments follow: residues 9–29 (IFWAFLIISSAIPFLAFLISG), 64–84 (MFALVFVVFDVETVFLYPWAM), and 88–108 (VLGVSAFIEAFIFVLILILGL).

Belongs to the complex I subunit 3 family. In terms of assembly, NDH is composed of at least 16 different subunits, 5 of which are encoded in the nucleus.

Its subcellular location is the plastid. The protein localises to the chloroplast thylakoid membrane. The catalysed reaction is a plastoquinone + NADH + (n+1) H(+)(in) = a plastoquinol + NAD(+) + n H(+)(out). It carries out the reaction a plastoquinone + NADPH + (n+1) H(+)(in) = a plastoquinol + NADP(+) + n H(+)(out). Functionally, NDH shuttles electrons from NAD(P)H:plastoquinone, via FMN and iron-sulfur (Fe-S) centers, to quinones in the photosynthetic chain and possibly in a chloroplast respiratory chain. The immediate electron acceptor for the enzyme in this species is believed to be plastoquinone. Couples the redox reaction to proton translocation, and thus conserves the redox energy in a proton gradient. The sequence is that of NAD(P)H-quinone oxidoreductase subunit 3, chloroplastic from Aethionema cordifolium (Lebanon stonecress).